The primary structure comprises 488 residues: WD repeat-containing protein slp1 (488 aa).

Disordered regions lie at residues 1–29 (MEIAGNSSTISPTFSTPTKKRNLVFPNSP) and 74–93 (CGSPRNKSRPASRSDRFIPS). Residues 7-17 (SSTISPTFSTP) show a composition bias toward low complexity. 7 WD repeats span residues 178 to 215 (IDDYYLNLLDWSNLNVVAVALERNVYVWNADSGSVSAL), 219 to 258 (DESTYVASVKWSHDGSFLSVGLGNGLVDIYDVESQTKLRT), 261 to 298 (GHQARVGCLSWNRHVLSSGSRSGAIHHHDVRIANHQIG), 302 to 341 (GHSSEVCGLAWRSDGLQLASGGNDNVVQIWDARSSIPKFT), 344 to 386 (NHNA…RVNT), 388 to 429 (DAGS…LTKQ), and 434 to 473 (AHDTRVLYSALSPDGRILSTAASDENLKFWRVYDGDHVKR).

It belongs to the WD repeat CDC20/Fizzy family. As to quaternary structure, interacts with cdc13, mad3 and mes1.

Required for mad2-dependent spindle checkpoint activation. Promotes ubiquitin-dependent degradation of cdc13 by the anaphase promoting complex/cyclosome (APC/C). This is WD repeat-containing protein slp1 (slp1) from Schizosaccharomyces pombe (strain 972 / ATCC 24843) (Fission yeast).